A 136-amino-acid chain; its full sequence is UPF0216 protein PYRAB16100 (136 aa).

Belongs to the UPF0216 family.

The chain is UPF0216 protein PYRAB16100 from Pyrococcus abyssi (strain GE5 / Orsay).